We begin with the raw amino-acid sequence, 70 residues long: Large ribosomal subunit protein bL31 (70 aa).

Residues C16, C18, C37, and C40 each coordinate Zn(2+).

The protein belongs to the bacterial ribosomal protein bL31 family. Type A subfamily. As to quaternary structure, part of the 50S ribosomal subunit. Zn(2+) is required as a cofactor.

In terms of biological role, binds the 23S rRNA. This is Large ribosomal subunit protein bL31 from Pasteurella multocida (strain Pm70).